The chain runs to 533 residues: Conglutin beta 2 (533 aa).

The signal sequence occupies residues 1–30 (MGKMRVRFPTLVLVLGIVFLMAVSIGIAYG). Positions 31-108 (EKDVLKSHER…EQQQGSPSYS (78 aa)) are excised as a propeptide. Basic and acidic residues-rich tracts occupy residues 37–51 (SHER…EWQP) and 79–99 (SGYE…REQE). Disordered stretches follow at residues 37–123 (SHER…QRFQ) and 315–337 (KHAQ…LRSN). 2 consecutive Cupin type-1 domains span residues 115–273 (YHFS…EEIQ) and 332–494 (FNLR…EDIE). 2 N-linked (GlcNAc...) asparagine glycosylation sites follow: Asn-363 and Asn-444. Residues 503–533 (SYFANGQPQQQQQQQSEKEGRRGRRGSSLPF) are disordered.

Belongs to the 7S seed storage protein family. As to quaternary structure, multimers. Give rise to a complex array of processed forms, due to a large number of processing sites and changes in glycosylation.

In terms of biological role, seed storage protein. Accumulates during seed development and is hydrolyzed after germination to provide a carbon and nitrogen source for the developing seedling. Its function is as follows. Has a lectin-like activity. This Lupinus albus (White lupine) protein is Conglutin beta 2.